The sequence spans 144 residues: Cytochrome c oxidase subunit 4 isoform 1, mitochondrial (144 aa).

The Mitochondrial matrix portion of the chain corresponds to Ser-1 to Asn-73. An N6-acetyllysine; alternate modification is found at Lys-4. Lys-4 is modified (N6-succinyllysine; alternate). Lys-28 is modified (N6-acetyllysine). A phosphoserine mark is found at Ser-31 and Ser-33. Lys-35 is modified (N6-acetyllysine; alternate). N6-succinyllysine; alternate is present on Lys-35. Position 42 is an N6-acetyllysine (Lys-42). A helical transmembrane segment spans residues Glu-74 to Tyr-99. Residues Val-100–Lys-144 are Mitochondrial intermembrane-facing.

This sequence belongs to the cytochrome c oxidase IV family. In terms of assembly, component of the cytochrome c oxidase (complex IV, CIV), a multisubunit enzyme composed of 14 subunits. The complex is composed of a catalytic core of 3 subunits MT-CO1, MT-CO2 and MT-CO3, encoded in the mitochondrial DNA, and 11 supernumerary subunits COX4I, COX5A, COX5B, COX6A, COX6B, COX6C, COX7A, COX7B, COX7C, COX8 and NDUFA4, which are encoded in the nuclear genome. The complex exists as a monomer or a dimer and forms supercomplexes (SCs) in the inner mitochondrial membrane with NADH-ubiquinone oxidoreductase (complex I, CI) and ubiquinol-cytochrome c oxidoreductase (cytochrome b-c1 complex, complex III, CIII), resulting in different assemblies (supercomplex SCI(1)III(2)IV(1) and megacomplex MCI(2)III(2)IV(2)). Interacts with PHB2; the interaction decreases in absence of SPHK2. Interacts with AFG1L. Interacts with ABCB7; this interaction allows the regulation of cellular iron homeostasis and cellular reactive oxygen species (ROS) levels in cardiomyocytes. Interacts with FLVCR2; this interaction occurs in the absence of heme and is disrupted upon heme binding. Interacts with IRGC.

Its subcellular location is the mitochondrion inner membrane. It functions in the pathway energy metabolism; oxidative phosphorylation. In terms of biological role, component of the cytochrome c oxidase, the last enzyme in the mitochondrial electron transport chain which drives oxidative phosphorylation. The respiratory chain contains 3 multisubunit complexes succinate dehydrogenase (complex II, CII), ubiquinol-cytochrome c oxidoreductase (cytochrome b-c1 complex, complex III, CIII) and cytochrome c oxidase (complex IV, CIV), that cooperate to transfer electrons derived from NADH and succinate to molecular oxygen, creating an electrochemical gradient over the inner membrane that drives transmembrane transport and the ATP synthase. Cytochrome c oxidase is the component of the respiratory chain that catalyzes the reduction of oxygen to water. Electrons originating from reduced cytochrome c in the intermembrane space (IMS) are transferred via the dinuclear copper A center (CU(A)) of subunit 2 and heme A of subunit 1 to the active site in subunit 1, a binuclear center (BNC) formed by heme A3 and copper B (CU(B)). The BNC reduces molecular oxygen to 2 water molecules using 4 electrons from cytochrome c in the IMS and 4 protons from the mitochondrial matrix. This chain is Cytochrome c oxidase subunit 4 isoform 1, mitochondrial (COX4I1), found in Hylobates agilis (Agile gibbon).